We begin with the raw amino-acid sequence, 191 residues long: Peptidyl-tRNA hydrolase (191 aa).

Y15 is a binding site for tRNA. Catalysis depends on H20, which acts as the Proton acceptor. TRNA is bound by residues F66, N68, and N114.

The protein belongs to the PTH family. Monomer.

The protein localises to the cytoplasm. The enzyme catalyses an N-acyl-L-alpha-aminoacyl-tRNA + H2O = an N-acyl-L-amino acid + a tRNA + H(+). In terms of biological role, hydrolyzes ribosome-free peptidyl-tRNAs (with 1 or more amino acids incorporated), which drop off the ribosome during protein synthesis, or as a result of ribosome stalling. Catalyzes the release of premature peptidyl moieties from peptidyl-tRNA molecules trapped in stalled 50S ribosomal subunits, and thus maintains levels of free tRNAs and 50S ribosomes. The sequence is that of Peptidyl-tRNA hydrolase from Streptococcus agalactiae serotype Ia (strain ATCC 27591 / A909 / CDC SS700).